The sequence spans 456 residues: Cysteine--tRNA ligase (456 aa).

Residue C29 coordinates Zn(2+). The 'HIGH' region signature appears at 31–41; the sequence is VTVYDYCHVGH. Zn(2+) is bound by residues C210, H235, and E239. The short motif at 267–271 is the 'KMSKS' region element; that stretch reads KMSKS. An ATP-binding site is contributed by K270.

This sequence belongs to the class-I aminoacyl-tRNA synthetase family. Monomer. It depends on Zn(2+) as a cofactor.

The protein resides in the cytoplasm. The catalysed reaction is tRNA(Cys) + L-cysteine + ATP = L-cysteinyl-tRNA(Cys) + AMP + diphosphate. In Hydrogenovibrio crunogenus (strain DSM 25203 / XCL-2) (Thiomicrospira crunogena), this protein is Cysteine--tRNA ligase.